The primary structure comprises 357 residues: UDP-N-acetylglucosamine--N-acetylmuramyl-(pentapeptide) pyrophosphoryl-undecaprenol N-acetylglucosamine transferase (357 aa).

UDP-N-acetyl-alpha-D-glucosamine contacts are provided by residues 15-17, Asn125, Ser190, and Gln290; that span reads SGG.

This sequence belongs to the glycosyltransferase 28 family. MurG subfamily.

The protein resides in the cell inner membrane. The enzyme catalyses di-trans,octa-cis-undecaprenyl diphospho-N-acetyl-alpha-D-muramoyl-L-alanyl-D-glutamyl-meso-2,6-diaminopimeloyl-D-alanyl-D-alanine + UDP-N-acetyl-alpha-D-glucosamine = di-trans,octa-cis-undecaprenyl diphospho-[N-acetyl-alpha-D-glucosaminyl-(1-&gt;4)]-N-acetyl-alpha-D-muramoyl-L-alanyl-D-glutamyl-meso-2,6-diaminopimeloyl-D-alanyl-D-alanine + UDP + H(+). It participates in cell wall biogenesis; peptidoglycan biosynthesis. Functionally, cell wall formation. Catalyzes the transfer of a GlcNAc subunit on undecaprenyl-pyrophosphoryl-MurNAc-pentapeptide (lipid intermediate I) to form undecaprenyl-pyrophosphoryl-MurNAc-(pentapeptide)GlcNAc (lipid intermediate II). This is UDP-N-acetylglucosamine--N-acetylmuramyl-(pentapeptide) pyrophosphoryl-undecaprenol N-acetylglucosamine transferase from Chlamydia pneumoniae (Chlamydophila pneumoniae).